The sequence spans 310 residues: Aspartate carbamoyltransferase catalytic subunit (310 aa).

Arginine 55 and threonine 56 together coordinate carbamoyl phosphate. Residue lysine 83 coordinates L-aspartate. Positions 105, 133, and 136 each coordinate carbamoyl phosphate. Residues arginine 166 and arginine 220 each contribute to the L-aspartate site. Residues glycine 261 and proline 262 each contribute to the carbamoyl phosphate site.

The protein belongs to the aspartate/ornithine carbamoyltransferase superfamily. ATCase family. In terms of assembly, heterododecamer (2C3:3R2) of six catalytic PyrB chains organized as two trimers (C3), and six regulatory PyrI chains organized as three dimers (R2).

The enzyme catalyses carbamoyl phosphate + L-aspartate = N-carbamoyl-L-aspartate + phosphate + H(+). Its pathway is pyrimidine metabolism; UMP biosynthesis via de novo pathway; (S)-dihydroorotate from bicarbonate: step 2/3. Functionally, catalyzes the condensation of carbamoyl phosphate and aspartate to form carbamoyl aspartate and inorganic phosphate, the committed step in the de novo pyrimidine nucleotide biosynthesis pathway. In Chlorobium phaeovibrioides (strain DSM 265 / 1930) (Prosthecochloris vibrioformis (strain DSM 265)), this protein is Aspartate carbamoyltransferase catalytic subunit.